The chain runs to 388 residues: Succinate--CoA ligase [ADP-forming] subunit beta (388 aa).

The region spanning 9–244 (KEIFRSMGVA…LEEEDPKEIE (236 aa)) is the ATP-grasp domain. Residues Lys-46, 53–55 (GRG), Glu-99, Cys-102, and Glu-107 each bind ATP. The Mg(2+) site is built by Asn-199 and Asp-213. Residues Asn-264 and 321 to 323 (GIM) each bind substrate.

The protein belongs to the succinate/malate CoA ligase beta subunit family. In terms of assembly, heterotetramer of two alpha and two beta subunits. Requires Mg(2+) as cofactor.

It catalyses the reaction succinate + ATP + CoA = succinyl-CoA + ADP + phosphate. The catalysed reaction is GTP + succinate + CoA = succinyl-CoA + GDP + phosphate. The protein operates within carbohydrate metabolism; tricarboxylic acid cycle; succinate from succinyl-CoA (ligase route): step 1/1. Functionally, succinyl-CoA synthetase functions in the citric acid cycle (TCA), coupling the hydrolysis of succinyl-CoA to the synthesis of either ATP or GTP and thus represents the only step of substrate-level phosphorylation in the TCA. The beta subunit provides nucleotide specificity of the enzyme and binds the substrate succinate, while the binding sites for coenzyme A and phosphate are found in the alpha subunit. This chain is Succinate--CoA ligase [ADP-forming] subunit beta, found in Staphylococcus aureus (strain MRSA252).